The chain runs to 341 residues: Flagellar P-ring protein (341 aa).

An N-terminal signal peptide occupies residues M1 to A19.

It belongs to the FlgI family. In terms of assembly, the basal body constitutes a major portion of the flagellar organelle and consists of four rings (L,P,S, and M) mounted on a central rod.

The protein resides in the periplasm. It localises to the bacterial flagellum basal body. Functionally, assembles around the rod to form the L-ring and probably protects the motor/basal body from shearing forces during rotation. This is Flagellar P-ring protein from Helicobacter acinonychis (strain Sheeba).